Consider the following 160-residue polypeptide: UPF0758 protein YfjY (160 aa).

Residues A38–L160 form the MPN domain. Residues H109, H111, and D122 each contribute to the Zn(2+) site. Residues H109 to D122 carry the JAMM motif motif.

Belongs to the UPF0758 family.

The sequence is that of UPF0758 protein YfjY (yfjY) from Escherichia coli (strain K12).